The following is a 201-amino-acid chain: uncharacterized protein (201 aa).

Residues 11 to 31 (IIILTIMILTIIIFTRTINGL) form a helical membrane-spanning segment.

Its subcellular location is the membrane. This is an uncharacterized protein from Acanthamoeba polyphaga mimivirus (APMV).